A 403-amino-acid polypeptide reads, in one-letter code: L-lactate oxidase (403 aa).

Residues 21 to 375 (EGSVDFVNVF…KHFKLRHNPY (355 aa)) form the FMN hydroxy acid dehydrogenase domain. Residue Y47 coordinates pyruvate. Residues 99–101 (PVA), S128, and Q150 each bind FMN. Y152 provides a ligand contact to pyruvate. T178 is a binding site for FMN. Pyruvate contacts are provided by R187 and Y220. K246 serves as a coordination point for FMN. Pyruvate contacts are provided by H270 and R273. Catalysis depends on H270, which acts as the Proton acceptor. Residues 301–305 (DSGVR) and R325 contribute to the FMN site.

It belongs to the FMN-dependent alpha-hydroxy acid dehydrogenase family. Homotetramer. The cofactor is FMN.

The enzyme catalyses (S)-lactate + O2 = pyruvate + H2O2. Its function is as follows. Catalyzes the oxidation of (S)-lactate (L-lactate) to pyruvate, with a reduction of O2 to H2O2. Is likely involved in the L-lactate aerobic metabolism of S.iniae that enables the bacterium to utilize L-lactate as an energy source for growth under aerobic conditions in the absence (or at low concentrations) of glucose. This chain is L-lactate oxidase, found in Streptococcus iniae (Streptococcus shiloi).